A 407-amino-acid polypeptide reads, in one-letter code: Cation efflux system protein CusB (407 aa).

The signal sequence occupies residues 1 to 28 (MKKIALIIGSMIAGGIISAAGFTWFAKA).

Belongs to the membrane fusion protein (MFP) (TC 8.A.1) family. As to quaternary structure, the cus efflux system is composed of CusA, CusB, CusC and CusF.

Functionally, part of a cation efflux system that mediates resistance to copper and silver. The chain is Cation efflux system protein CusB (cusB) from Escherichia coli O157:H7.